Reading from the N-terminus, the 393-residue chain is Nuclear speckle splicing regulatory protein 1 homolog (393 aa).

The tract at residues 1–49 (MSAPPKRFGLIVKQKEEPKRAPVRVSSVFGDDDDDEAPATATNTSSASV) is disordered. A compositionally biased stretch (low complexity) spans 39 to 48 (ATATNTSSAS). The stretch at 76-166 (NYDEIQAIKN…YREQEAEEAA (91 aa)) forms a coiled coil. The interval 187 to 350 (LLNDLARDPT…SLKDKLKPKR (164 aa)) is disordered. Residues 199-209 (KQRKMEKKNVR) show a composition bias toward basic residues. Basic and acidic residues-rich tracts occupy residues 222-236 (EDVKKKEEPKKKSIY), 243-261 (DEKKSKAPEAPKKNFEGEL), 317-333 (DHAQRNQREKTKSKSPE), and 341-350 (SLKDKLKPKR).

This sequence belongs to the NSRP1 family.

In Caenorhabditis briggsae, this protein is Nuclear speckle splicing regulatory protein 1 homolog.